A 359-amino-acid polypeptide reads, in one-letter code: Phospho-N-acetylmuramoyl-pentapeptide-transferase (359 aa).

10 consecutive transmembrane segments (helical) span residues 24 to 44 (FRAL…SPIF), 72 to 92 (FVPS…SILL), 100 to 120 (TWIM…DDFV), 134 to 154 (MLGQ…VMHI), 170 to 190 (LGYF…NAVN), 197 to 217 (GLAI…SYVA), 234 to 254 (AGEL…FLWF), 261 to 281 (MFMG…LAIM), 289 to 309 (IIAG…VSVF), and 336 to 356 (KIVV…IATL).

The protein belongs to the glycosyltransferase 4 family. MraY subfamily. Requires Mg(2+) as cofactor.

It is found in the cell inner membrane. It carries out the reaction UDP-N-acetyl-alpha-D-muramoyl-L-alanyl-gamma-D-glutamyl-meso-2,6-diaminopimeloyl-D-alanyl-D-alanine + di-trans,octa-cis-undecaprenyl phosphate = di-trans,octa-cis-undecaprenyl diphospho-N-acetyl-alpha-D-muramoyl-L-alanyl-D-glutamyl-meso-2,6-diaminopimeloyl-D-alanyl-D-alanine + UMP. Its pathway is cell wall biogenesis; peptidoglycan biosynthesis. Catalyzes the initial step of the lipid cycle reactions in the biosynthesis of the cell wall peptidoglycan: transfers peptidoglycan precursor phospho-MurNAc-pentapeptide from UDP-MurNAc-pentapeptide onto the lipid carrier undecaprenyl phosphate, yielding undecaprenyl-pyrophosphoryl-MurNAc-pentapeptide, known as lipid I. This is Phospho-N-acetylmuramoyl-pentapeptide-transferase from Hydrogenobaculum sp. (strain Y04AAS1).